The chain runs to 73 residues: UPF0154 protein MG335.1 homolog (73 aa).

Residues 6 to 26 (LALGLGIPLSLLVGVIIGYFI) traverse the membrane as a helical segment.

Belongs to the UPF0154 family.

It localises to the membrane. The protein is UPF0154 protein MG335.1 homolog of Mycoplasma pneumoniae (strain ATCC 29342 / M129 / Subtype 1) (Mycoplasmoides pneumoniae).